Here is a 342-residue protein sequence, read N- to C-terminus: tRNA(Ile)-lysidine synthase (342 aa).

31-36 lines the ATP pocket; it reads SGGQDS.

This sequence belongs to the tRNA(Ile)-lysidine synthase family.

The protein resides in the cytoplasm. It catalyses the reaction cytidine(34) in tRNA(Ile2) + L-lysine + ATP = lysidine(34) in tRNA(Ile2) + AMP + diphosphate + H(+). Ligates lysine onto the cytidine present at position 34 of the AUA codon-specific tRNA(Ile) that contains the anticodon CAU, in an ATP-dependent manner. Cytidine is converted to lysidine, thus changing the amino acid specificity of the tRNA from methionine to isoleucine. This chain is tRNA(Ile)-lysidine synthase, found in Nostoc sp. (strain PCC 7120 / SAG 25.82 / UTEX 2576).